The chain runs to 197 residues: UPF0200 protein MJ1399 (197 aa).

Gly8–Ser15 contributes to the ATP binding site.

The protein belongs to the UPF0200 family.

The chain is UPF0200 protein MJ1399 from Methanocaldococcus jannaschii (strain ATCC 43067 / DSM 2661 / JAL-1 / JCM 10045 / NBRC 100440) (Methanococcus jannaschii).